The chain runs to 232 residues: Cytidylate kinase (232 aa).

The tract at residues methionine 1–serine 21 is disordered. ATP is bound at residue glycine 13–serine 21.

The protein belongs to the cytidylate kinase family. Type 1 subfamily.

It is found in the cytoplasm. It carries out the reaction CMP + ATP = CDP + ADP. It catalyses the reaction dCMP + ATP = dCDP + ADP. This chain is Cytidylate kinase, found in Nocardia farcinica (strain IFM 10152).